The sequence spans 180 residues: Ribosome maturation factor RimM (180 aa).

The PRC barrel domain maps to 99 to 179 (NNEYYWKDIV…IVIKNWKQTF (81 aa)).

It belongs to the RimM family. In terms of assembly, binds ribosomal protein uS19.

Its subcellular location is the cytoplasm. An accessory protein needed during the final step in the assembly of 30S ribosomal subunit, possibly for assembly of the head region. Essential for efficient processing of 16S rRNA. May be needed both before and after RbfA during the maturation of 16S rRNA. It has affinity for free ribosomal 30S subunits but not for 70S ribosomes. This chain is Ribosome maturation factor RimM, found in Buchnera aphidicola subsp. Baizongia pistaciae (strain Bp).